The chain runs to 405 residues: Glucoside xylosyltransferase 1 (405 aa).

The Cytoplasmic portion of the chain corresponds to 1 to 2; that stretch reads MR. Residues 3 to 23 traverse the membrane as a helical; Signal-anchor for type II membrane protein segment; it reads IYLRTFGLCIVVALLSLVFLF. Residues 24-405 lie on the Lumenal side of the membrane; it reads SKHDEGSFSA…RLQRATPPGD (382 aa). The disordered stretch occupies residues 46 to 65; it reads SFNGAKAKQRPTATTSHRDV. 4 N-linked (GlcNAc...) asparagine glycosylation sites follow: Asn202, Asn243, Asn277, and Asn372.

This sequence belongs to the glycosyltransferase 8 family.

It localises to the membrane. It carries out the reaction 3-O-(beta-D-glucosyl)-L-seryl-[EGF-like domain protein] + UDP-alpha-D-xylose = 3-O-[alpha-D-xylosyl-(1-&gt;3)-beta-D-glucosyl]-L-seryl-[EGF-like domain protein] + UDP + H(+). In terms of biological role, glycosyltransferase which elongates the O-linked glucose attached to EGF-like repeats in the extracellular domain of Notch proteins by catalyzing the addition of xylose. This Danio rerio (Zebrafish) protein is Glucoside xylosyltransferase 1 (gxylt1).